A 362-amino-acid chain; its full sequence is Probable branched-chain-amino-acid aminotransferase (362 aa).

At K202 the chain carries N6-(pyridoxal phosphate)lysine.

Belongs to the class-IV pyridoxal-phosphate-dependent aminotransferase family. Requires pyridoxal 5'-phosphate as cofactor.

The enzyme catalyses L-leucine + 2-oxoglutarate = 4-methyl-2-oxopentanoate + L-glutamate. It catalyses the reaction L-isoleucine + 2-oxoglutarate = (S)-3-methyl-2-oxopentanoate + L-glutamate. It carries out the reaction L-valine + 2-oxoglutarate = 3-methyl-2-oxobutanoate + L-glutamate. Its pathway is amino-acid biosynthesis; L-isoleucine biosynthesis; L-isoleucine from 2-oxobutanoate: step 4/4. It participates in amino-acid biosynthesis; L-leucine biosynthesis; L-leucine from 3-methyl-2-oxobutanoate: step 4/4. The protein operates within amino-acid biosynthesis; L-valine biosynthesis; L-valine from pyruvate: step 4/4. In terms of biological role, acts on leucine, isoleucine and valine. The polypeptide is Probable branched-chain-amino-acid aminotransferase (ilvE) (Streptomyces coelicolor (strain ATCC BAA-471 / A3(2) / M145)).